The primary structure comprises 557 residues: Protein NRT1/ PTR FAMILY 5.10 (557 aa).

The next 2 helical transmembrane spans lie at 49–67 (FAYYGISSNLITYLTGPLG) and 79–99 (AWSGTASLLPLLGAFVADSFL). At Thr104 the chain carries Phosphothreonine. The next 10 helical transmembrane spans lie at 105–125 (ILAASALYIVGLGVLTLSAMI), 144–164 (VITFFSALYLVALAQGGHKPC), 186–206 (SFFNWWYFGMCFGTLTTLWVL), 215–235 (WALGFGIPCIAMVVALVVLLL), 320–340 (APIWLTCLVYAVVFAQSPTFF), 365–385 (FISLSIVIFIPIYDRVLIPIA), 401–421 (IGTGIFLSFLAMVVAALVEMK), 443–463 (VWWLVPQYVLFGITDVFAMVG), 479–499 (VGLALYLSIFGIGNFLSSFMI), and 526–546 (YFYWLLACLSFIGLASYLYVA).

It belongs to the major facilitator superfamily. Proton-dependent oligopeptide transporter (POT/PTR) (TC 2.A.17) family. As to expression, expressed in shoots, roots and stems. Detected in leaves, flowers and siliques.

It is found in the membrane. This is Protein NRT1/ PTR FAMILY 5.10 (NPF5.10) from Arabidopsis thaliana (Mouse-ear cress).